Here is a 177-residue protein sequence, read N- to C-terminus: Large ribosomal subunit protein uL6 (177 aa).

The protein belongs to the universal ribosomal protein uL6 family. Part of the 50S ribosomal subunit.

Functionally, this protein binds to the 23S rRNA, and is important in its secondary structure. It is located near the subunit interface in the base of the L7/L12 stalk, and near the tRNA binding site of the peptidyltransferase center. This is Large ribosomal subunit protein uL6 from Salmonella arizonae (strain ATCC BAA-731 / CDC346-86 / RSK2980).